We begin with the raw amino-acid sequence, 141 residues long: ATP synthase epsilon chain (141 aa).

This sequence belongs to the ATPase epsilon chain family. As to quaternary structure, F-type ATPases have 2 components, CF(1) - the catalytic core - and CF(0) - the membrane proton channel. CF(1) has five subunits: alpha(3), beta(3), gamma(1), delta(1), epsilon(1). CF(0) has three main subunits: a, b and c.

The protein resides in the cell inner membrane. Its function is as follows. Produces ATP from ADP in the presence of a proton gradient across the membrane. This chain is ATP synthase epsilon chain, found in Burkholderia ambifaria (strain ATCC BAA-244 / DSM 16087 / CCUG 44356 / LMG 19182 / AMMD) (Burkholderia cepacia (strain AMMD)).